Reading from the N-terminus, the 526-residue chain is GMP synthase [glutamine-hydrolyzing] (526 aa).

Positions 4–204 (KIVVLDFGSQ…AHAICGCSGD (201 aa)) constitute a Glutamine amidotransferase type-1 domain. Cys87 functions as the Nucleophile in the catalytic mechanism. Active-site residues include His178 and Glu180. The region spanning 205 to 401 (WTPASFVEEQ…LDVPDPIVGR (197 aa)) is the GMPS ATP-PPase domain. An ATP-binding site is contributed by 232-238 (SGGVDSS).

As to quaternary structure, homodimer.

It carries out the reaction XMP + L-glutamine + ATP + H2O = GMP + L-glutamate + AMP + diphosphate + 2 H(+). The protein operates within purine metabolism; GMP biosynthesis; GMP from XMP (L-Gln route): step 1/1. Catalyzes the synthesis of GMP from XMP. The sequence is that of GMP synthase [glutamine-hydrolyzing] from Salinibacter ruber (strain DSM 13855 / M31).